A 119-amino-acid chain; its full sequence is Parathyroid hormone (119 aa).

A signal peptide spans 1 to 25; sequence MTSTKNLAKAIVILYAICFFTNSDG. Positions 26 to 31 are excised as a propeptide; sequence RPMMKR.

It belongs to the parathyroid hormone family. As to quaternary structure, interacts with PTH1R (via N-terminal extracellular domain).

The protein resides in the secreted. Parathyroid hormone elevates calcium level by dissolving the salts in bone and preventing their renal excretion. Acts by binding to its receptor, PTH1R, activating G protein-coupled receptor signaling. Stimulates [1-14C]-2-deoxy-D-glucose (2DG) transport and glycogen synthesis in osteoblastic cells. The sequence is that of Parathyroid hormone from Gallus gallus (Chicken).